The primary structure comprises 1124 residues: Ras-associating and dilute domain-containing protein (1124 aa).

The 104-residue stretch at 61–164 (APGVLKIFGD…RRFELRRRAE (104 aa)) folds into the Ras-associating domain. Positions 226 to 253 (YYSTLPGPIRTRSARDSEIRKERDGGGV) are disordered. Residues 238–252 (SARDSEIRKERDGGG) are compositionally biased toward basic and acidic residues. Residues 284–342 (HTVGQETASARPNICLSSPDVLPLHCRIRRAAQRRSSSDQRLLLEPVAHGNVLVNFMRI) form the FHA domain. The Dilute domain maps to 516–809 (ASLSLLSISD…VDLLESFENH (294 aa)). Disordered stretches follow at residues 850–942 (THPS…TPPN) and 960–982 (PEHA…CMRS). Residues 866–876 (PPQPHSSPHPA) show a composition bias toward pro residues. Basic and acidic residues predominate over residues 903 to 912 (AEDRTRDKPT). The span at 926-937 (ANQSQATDSSCI) shows a compositional bias: polar residues. The span at 960 to 969 (PEHASQEHTH) shows a compositional bias: basic and acidic residues. The 86-residue stretch at 1027-1112 (VVDLDKGPYG…RLRFLVAKSD (86 aa)) folds into the PDZ domain.

It belongs to the RADIL family. In terms of assembly, interacts with RAP1A; in a GTP-dependent manner. As to expression, ubiquitously expressed and enriched in the anterior part of the embryos.

Functionally, downstream effector of Rap required for cell adhesion and migration of neural crest precursors during development. This chain is Ras-associating and dilute domain-containing protein (radil), found in Danio rerio (Zebrafish).